The primary structure comprises 461 residues: Photosystem II CP43 reaction center protein (461 aa).

The propeptide occupies 1 to 2 (ME). N-acetylthreonine is present on T3. The residue at position 3 (T3) is a Phosphothreonine. The next 5 helical transmembrane spans lie at 57–81 (LFEV…PHLA), 122–143 (LLGP…KDRN), 166–188 (KALY…RKIT), 243–263 (KPFA…LSYS), and 279–300 (WFNN…ASQA). A [CaMn4O5] cluster-binding site is contributed by E355. Residues 435-459 (RARAAAAGFEKGIDRDLEPVLFMTP) traverse the membrane as a helical segment.

This sequence belongs to the PsbB/PsbC family. PsbC subfamily. PSII is composed of 1 copy each of membrane proteins PsbA, PsbB, PsbC, PsbD, PsbE, PsbF, PsbH, PsbI, PsbJ, PsbK, PsbL, PsbM, PsbT, PsbX, PsbY, PsbZ, Psb30/Ycf12, at least 3 peripheral proteins of the oxygen-evolving complex and a large number of cofactors. It forms dimeric complexes. Binds multiple chlorophylls and provides some of the ligands for the Ca-4Mn-5O cluster of the oxygen-evolving complex. It may also provide a ligand for a Cl- that is required for oxygen evolution. PSII binds additional chlorophylls, carotenoids and specific lipids. serves as cofactor.

The protein resides in the plastid. It localises to the chloroplast thylakoid membrane. In terms of biological role, one of the components of the core complex of photosystem II (PSII). It binds chlorophyll and helps catalyze the primary light-induced photochemical processes of PSII. PSII is a light-driven water:plastoquinone oxidoreductase, using light energy to abstract electrons from H(2)O, generating O(2) and a proton gradient subsequently used for ATP formation. The chain is Photosystem II CP43 reaction center protein from Nandina domestica (Heavenly bamboo).